Here is a 341-residue protein sequence, read N- to C-terminus: Glycerol-3-phosphate dehydrogenase [NAD(P)+] (341 aa).

Residues serine 11, tryptophan 12, arginine 32, and lysine 106 each coordinate NADPH. Positions 106, 137, and 139 each coordinate sn-glycerol 3-phosphate. Alanine 141 serves as a coordination point for NADPH. Sn-glycerol 3-phosphate contacts are provided by lysine 192, aspartate 245, serine 255, arginine 256, and asparagine 257. Residue lysine 192 is the Proton acceptor of the active site. Arginine 256 is a binding site for NADPH. NADPH-binding residues include valine 280 and glutamate 282.

This sequence belongs to the NAD-dependent glycerol-3-phosphate dehydrogenase family.

The protein localises to the cytoplasm. It carries out the reaction sn-glycerol 3-phosphate + NAD(+) = dihydroxyacetone phosphate + NADH + H(+). The enzyme catalyses sn-glycerol 3-phosphate + NADP(+) = dihydroxyacetone phosphate + NADPH + H(+). The protein operates within membrane lipid metabolism; glycerophospholipid metabolism. Catalyzes the reduction of the glycolytic intermediate dihydroxyacetone phosphate (DHAP) to sn-glycerol 3-phosphate (G3P), the key precursor for phospholipid synthesis. This is Glycerol-3-phosphate dehydrogenase [NAD(P)+] from Exiguobacterium sp. (strain ATCC BAA-1283 / AT1b).